The chain runs to 1029 residues: Error-prone DNA polymerase (1029 aa).

This sequence belongs to the DNA polymerase type-C family. DnaE2 subfamily.

Its subcellular location is the cytoplasm. The enzyme catalyses DNA(n) + a 2'-deoxyribonucleoside 5'-triphosphate = DNA(n+1) + diphosphate. Its function is as follows. DNA polymerase involved in damage-induced mutagenesis and translesion synthesis (TLS). It is not the major replicative DNA polymerase. The protein is Error-prone DNA polymerase of Saccharophagus degradans (strain 2-40 / ATCC 43961 / DSM 17024).